Here is a 158-residue protein sequence, read N- to C-terminus: Probable cyclic pyranopterin monophosphate synthase (158 aa).

Residues 75 to 77 and 111 to 112 each bind substrate; these read MCH and ME. The active site involves D126.

This sequence belongs to the MoaC family. Homohexamer; trimer of dimers.

The catalysed reaction is (8S)-3',8-cyclo-7,8-dihydroguanosine 5'-triphosphate = cyclic pyranopterin phosphate + diphosphate. Its pathway is cofactor biosynthesis; molybdopterin biosynthesis. Catalyzes the conversion of (8S)-3',8-cyclo-7,8-dihydroguanosine 5'-triphosphate to cyclic pyranopterin monophosphate (cPMP). In Methanocorpusculum labreanum (strain ATCC 43576 / DSM 4855 / Z), this protein is Probable cyclic pyranopterin monophosphate synthase.